Reading from the N-terminus, the 341-residue chain is Aspartate--ammonia ligase (341 aa).

It belongs to the class-II aminoacyl-tRNA synthetase family. AsnA subfamily.

Its subcellular location is the cytoplasm. It carries out the reaction L-aspartate + NH4(+) + ATP = L-asparagine + AMP + diphosphate + H(+). It functions in the pathway amino-acid biosynthesis; L-asparagine biosynthesis; L-asparagine from L-aspartate (ammonia route): step 1/1. The protein is Aspartate--ammonia ligase of Clostridium tetani (strain Massachusetts / E88).